Here is a 413-residue protein sequence, read N- to C-terminus: Divalent metal cation transporter MntH (413 aa).

A run of 11 helical transmembrane segments spans residues 19 to 39, 49 to 69, 94 to 114, 122 to 142, 155 to 175, 196 to 216, 240 to 260, 287 to 307, 323 to 343, 349 to 369, and 393 to 413; these read FALM…GNFA, GYQL…IQLM, VWFY…AEFI, LVFG…TFLI, LVIG…LFFS, AVLL…IYLH, VAIA…TAAA, AAAL…TVVG, IPLL…ILAG, ILVM…IPLL, and LIVV…ALNL.

It belongs to the NRAMP family.

Its subcellular location is the cell inner membrane. In terms of biological role, h(+)-stimulated, divalent metal cation uptake system. In Erwinia tasmaniensis (strain DSM 17950 / CFBP 7177 / CIP 109463 / NCPPB 4357 / Et1/99), this protein is Divalent metal cation transporter MntH.